The following is a 903-amino-acid chain: Glutamate receptor ionotropic, NMDA 1 (903 aa).

Positions 1–20 (MGTMRLFLLAVLFLFSFARA) are cleaved as a signal peptide. Over 21–557 (GCDPKIVNIG…TLDSFMQPFQ (537 aa)) the chain is Extracellular. N-linked (GlcNAc...) asparagine glycans are attached at residues Asn-61, Asn-203, Asn-276, Asn-300, Asn-350, Asn-368, Asn-440, Asn-469, and Asn-489. Cysteines 79 and 308 form a disulfide. Intrachain disulfides connect Cys-420/Cys-452 and Cys-436/Cys-453. Residues Pro-514, Thr-516, and Arg-521 each contribute to the glycine site. Residues 558 to 578 (STLWLLVGLSVHVVAVMLYLL) form a helical membrane-spanning segment. Over 579–600 (DRFSPFGRFKVNSEEEEEDALT) the chain is Cytoplasmic. The interval 601–620 (LSSAMWFSWGVLLNSGIGEG) is pore-forming. Residues 601 to 622 (LSSAMWFSWGVLLNSGIGEGAP) constitute an intramembrane region (discontinuously helical). Residues 623-628 (RSFSAR) are Cytoplasmic-facing. Residues 629–645 (ILGMVWAGFAMIIVASY) traverse the membrane as a helical segment. The Extracellular portion of the chain corresponds to 646–810 (TANLAAFLVL…NAPATLTFEN (165 aa)). Glycine is bound by residues Ser-686 and Asp-730. A disulfide bridge links Cys-742 with Cys-796. A glycan (N-linked (GlcNAc...) asparagine) is linked at Asn-769. Residues 811–831 (MAGVFMLVAGGIVAGIFLIFI) form a helical membrane-spanning segment. Over 832–903 (EIAYKRHKDA…SSKDTVNVVV (72 aa)) the chain is Cytoplasmic.

It belongs to the glutamate-gated ion channel (TC 1.A.10.1) family. NR1/GRIN1 subfamily. Heterotetramer; the NMDAR subunits are modular and harbor tiered domains that function in concert to regulate opening and closing of the cation-selective ion channel pore. Forms heterotetrameric channels composed of two GluN1/zeta subunits (GRIN1), and two identical GluN2/epsilon subunits (GRIN2A, GRIN2B, GRIN2C or GRIN2D) or GluN3 subunits (GRIN3A or GRIN3B) (in vitro). Does not form functional channels by itself. Can also form heterotetrameric channels that contain at least two GluN1 subunits and at least two different GluN2 subunits (or a combination of one GluN2 and one GluN3 subunits) (in vitro). In vivo, the subunit composition may vary in function of the expression levels of the different subunits.

It is found in the cell membrane. It localises to the postsynaptic cell membrane. The protein localises to the postsynaptic density membrane. Its subcellular location is the synaptic cell membrane. It carries out the reaction Ca(2+)(in) = Ca(2+)(out). The catalysed reaction is Na(+)(in) = Na(+)(out). It catalyses the reaction K(+)(in) = K(+)(out). With respect to regulation, NMDA glutamate receptor activity is modulated by zinc ions. The NMDA glutamate receptor activity of the heterotetramer with grin2b is stimulated by micromolar levels of Zn(2+). The NMDA glutamate receptor activity of the heterotetramer with grin2a is inhibited by nanomolar levels of Zn(2+). Functionally, component of N-methyl-D-aspartate (NMDA) receptors (NMDARs) that function as heterotetrameric, ligand-gated cation channels with high calcium permeability and voltage-dependent block by Mg(2+). NMDARs participate in synaptic plasticity. Channel activation requires binding of the neurotransmitter L-glutamate to the GluN2 subunit, glycine binding to the GluN1 subunit, plus membrane depolarization to eliminate channel inhibition by Mg(2+). NMDARs mediate simultaneously the potasium efflux and the influx of calcium and sodium. Each GluN2 or GluN3 subunit confers differential attributes to channel properties, including activation, deactivation and desensitization kinetics, pH sensitivity, Ca2(+) permeability, and binding to allosteric modulators. In Xenopus laevis (African clawed frog), this protein is Glutamate receptor ionotropic, NMDA 1.